Consider the following 469-residue polypeptide: 3-isopropylmalate dehydratase large subunit (469 aa).

[4Fe-4S] cluster contacts are provided by Cys-350, Cys-410, and Cys-413.

The protein belongs to the aconitase/IPM isomerase family. LeuC type 1 subfamily. In terms of assembly, heterodimer of LeuC and LeuD. [4Fe-4S] cluster serves as cofactor.

The enzyme catalyses (2R,3S)-3-isopropylmalate = (2S)-2-isopropylmalate. The protein operates within amino-acid biosynthesis; L-leucine biosynthesis; L-leucine from 3-methyl-2-oxobutanoate: step 2/4. Its function is as follows. Catalyzes the isomerization between 2-isopropylmalate and 3-isopropylmalate, via the formation of 2-isopropylmaleate. The chain is 3-isopropylmalate dehydratase large subunit from Rhodopseudomonas palustris (strain ATCC BAA-98 / CGA009).